Consider the following 860-residue polypeptide: Leucine--tRNA ligase (860 aa).

The 'HIGH' region motif lies at 42–52; it reads PYPSGRLHMGH. A 'KMSKS' region motif is present at residues 619-623; the sequence is KMSKS. Lysine 622 contacts ATP.

This sequence belongs to the class-I aminoacyl-tRNA synthetase family.

It localises to the cytoplasm. It catalyses the reaction tRNA(Leu) + L-leucine + ATP = L-leucyl-tRNA(Leu) + AMP + diphosphate. In Escherichia coli (strain SE11), this protein is Leucine--tRNA ligase.